The sequence spans 221 residues: Large ribosomal subunit protein uL16y (221 aa).

It belongs to the universal ribosomal protein uL16 family. As to quaternary structure, component of the small ribosomal subunit. Mature ribosomes consist of a small (40S) and a large (60S) subunit. The 40S subunit contains about 33 different proteins and 1 molecule of RNA (18S). The 60S subunit contains about 49 different proteins and 3 molecules of RNA (25S, 5.8S and 5S).

The polypeptide is Large ribosomal subunit protein uL16y (RPL10B) (Arabidopsis thaliana (Mouse-ear cress)).